Consider the following 902-residue polypeptide: Chloride channel protein 2 (902 aa).

Topologically, residues 1–89 (MAASAAAAGE…RCHKFLVSRV (89 aa)) are cytoplasmic. The essential for channel gating by both voltage and cell volume stretch occupies residues 18 to 36 (QYEQTLMYGRYTQELGAFA). At T22 the chain carries Phosphothreonine. Positions 38–51 (EEAARIRLGGPEPW) are modulates channel gating by both voltage and cell volume. The next 2 helical transmembrane spans lie at 90–123 (GEDW…AQQW) and 132–157 (ILLQ…TQIL). A Selectivity filter part_1 motif is present at residues 163 to 167 (GSGIP). The helical intramembrane region spans 166-173 (IPEMKTIL). The next 2 helical transmembrane spans lie at 182–200 (LTLK…ALGS) and 207–225 (EGPF…SKFL). The Selectivity filter part_2 signature appears at 205 to 209 (GKEGP). Intramembrane regions (helical) lie at residues 241-253 (MLAA…VGCC) and 257-265 (PIGGVLFSI). A run of 5 helical transmembrane segments spans residues 277–297 (YWRG…LAVW), 323–351 (LPAF…VQVM), 360–379 (FLMR…ISTL), 431–451 (ANVF…SALA), and 459–482 (GAFM…MAAW). The Selectivity filter part_3 signature appears at 459–463 (GAFMP). The helical intramembrane region spans 499 to 513 (GGYAVVGAAALAGAV). Positions 514–515 (TH) form an intramembrane region, note=Loop between two helices. An intramembrane region (helical) is located at residues 516–527 (TVSTAVIVFELT). The segment at residues 528–532 (GQIAH) is an intramembrane region (note=Loop between two helices). The chain crosses the membrane as a helical span at residues 533 to 550 (ILPVMIAVILANAVAQSL). Residues 551 to 902 (QPSLYDSIIR…SPSDSDDKCQ (352 aa)) lie on the Cytoplasmic side of the membrane. The CBS 1 domain maps to 586–644 (MVRDVPYVALNCTFRDLRLALHRTKGRMLALVESSESMILLGSIERSQVVTLLGAQLSA). Residues 648-748 (RQHIQERRKA…TSDLEKPESC (101 aa)) are disordered. Polar residues-rich tracts occupy residues 671 to 683 (PESS…NTED) and 706 to 719 (SNAS…TGSM). The CBS 2 domain maps to 794-854 (IDPAPFQLVE…GSVTAQGVKV (61 aa)). A Basolateral membrane sorting motif is present at residues 816–817 (LL). Residues 860 to 902 (SFRDSATSSSDTETTEVHALWGPHSCHGLPRDGSPSDSDDKCQ) form a disordered region.

It belongs to the chloride channel (TC 2.A.49) family. ClC-2/CLCN2 subfamily. Homodimer. Interacts with auxiliary subunit HEPACAM.

It is found in the cell membrane. The protein localises to the basolateral cell membrane. It localises to the cell projection. Its subcellular location is the dendritic spine membrane. The protein resides in the axon. The catalysed reaction is chloride(in) = chloride(out). The enzyme catalyses thiocyanate(in) = thiocyanate(out). It carries out the reaction bromide(in) = bromide(out). It catalyses the reaction nitrate(in) = nitrate(out). The catalysed reaction is iodide(out) = iodide(in). With respect to regulation, common gate kinetics are down-regulated by intracellular ATP. Inhibited by AK-42, a derivative of meclofenamate. Inhibited by Cd(2+). Inhibited by Zn(2+) and PKC activation. Inhibited at acidic pH. CCLN2:HEPACAM channel conductance is up-regulated upon hypo-osmolarity. Its function is as follows. Voltage-gated and osmosensitive chloride channel. Forms a homodimeric channel where each subunit has its own ion conduction pathway. Conducts double-barreled currents controlled by two types of gates, two fast glutamate gates that control each subunit independently and a slow common gate that opens and shuts off both subunits simultaneously. Displays inward rectification currents activated upon membrane hyperpolarization and extracellular hypotonicity. Contributes to chloride conductance involved in neuron excitability. In hippocampal neurons, generates a significant part of resting membrane conductance and provides an additional chloride efflux pathway to prevent chloride accumulation in dendrites upon GABA receptor activation. In glia, associates with the auxiliary subunit HEPACAM/GlialCAM at astrocytic processes and myelinated fiber tracts where it may regulate transcellular chloride flux buffering extracellular chloride and potassium concentrations. Regulates aldosterone production in adrenal glands. The opening of CLCN2 channels at hyperpolarized membrane potentials in the glomerulosa causes cell membrane depolarization, activation of voltage-gated calcium channels and increased expression of aldosterone synthase, the rate-limiting enzyme for aldosterone biosynthesis. Contributes to chloride conductance in retinal pigment epithelium involved in phagocytosis of shed photoreceptor outer segments and photoreceptor renewal. Conducts chloride currents at the basolateral membrane of epithelial cells with a role in chloride reabsorption rather than secretion. Permeable to small monovalent anions with chloride &gt; thiocyanate &gt; bromide &gt; nitrate &gt; iodide ion selectivity. The protein is Chloride channel protein 2 (CLCN2) of Cavia porcellus (Guinea pig).